The primary structure comprises 520 residues: MIFLLTLAGLKVLSIVILFGIIYLFASSIYNLYFHPLSRFPGPFLARAQDFWVSRQWISGNWPWEVEALHAKYGDIVRIGPNELSCAHPQSIKDIYGQPNINHPQFFRKFTTFYKQTDVGGSIGTEVDPHIHQGIRKRLAPGFSVSALSKQSDIVIRHIDSLLHQVSRNGQCQSGMNMSQWFMWLAFDVIVDLSFGEELGTVETGTGNDWINMLANSGFQIALGYVVRRRWKALQDLVRYCLVNEKSKSMRTKYIANAREKARQRLERGADVERFDFFSHLLREKAPEANIDFFASQGTTLVAAGTETTSTFMSALTYYLLQNPRALDRLQEELRRSFKHHSEIDGESTKSLKYLNAAIEEGMRIFAPAPFGLPRVSPGAMVSGEWIPKGSIIATAAHVTSRDERWFFKSKEFHPERWLPLDHPHYDHIFSKDRKDASKPFSIGSRSCIGIHLSYMEVRICVSKLAWSFDWEQVSAHEDFVKDARLLGLWKAAPFHVRYQPYPGAEPPVMNHSKINSDLA.

A helical transmembrane segment spans residues 2 to 22 (IFLLTLAGLKVLSIVILFGII). An N-linked (GlcNAc...) asparagine glycan is attached at Asn-177. Residue Cys-448 participates in heme binding. Residue Asn-511 is glycosylated (N-linked (GlcNAc...) asparagine).

Belongs to the cytochrome P450 family. Requires heme as cofactor.

It localises to the membrane. It functions in the pathway secondary metabolite biosynthesis; terpenoid biosynthesis. Functionally, cytochrome P4590 monooxygenase part of the gene cluster that mediates the biosynthesis of betaestacins. The bifunctional terpene synthase btcA converts isopentenyl diphosphate (IPP) and dimethylallyl diphosphate (DMAPP) into the sesterterpene betaestacin I. The C-terminal prenyltransferase (PT) domain of btcA catalyzes formation of GFPP, whereas the N-terminal terpene cyclase (TC) domain catalyzes the cyclization of GFPP into betaestacin I. The cytochrome P450 monooxygenase btcB oxidizes the C25 methyl group of betaestacin I to yield the carboxylic acid betaestacin IV via the alcohol betaestacin III. The cytochrome P450 monooxygenase btcC further catalyzes the multistep oxidation of betaestacin IV to produce several compounds, including betaestacins Va, Vb, Vc and VI. This Colletotrichum orbiculare (strain 104-T / ATCC 96160 / CBS 514.97 / LARS 414 / MAFF 240422) (Cucumber anthracnose fungus) protein is Cytochrome P450 monooxygenase btcC.